The chain runs to 1039 residues: Translation initiation factor IF-2 (1039 aa).

2 disordered regions span residues 39–347 (TISE…KWQE) and 400–452 (ARPP…PEKV). Residues 103–125 (RNTTSNAPEASVANNQIASSEAN) show a composition bias toward polar residues. Positions 157–176 (PQKPAAPEAEPEAQSQAPAK) are enriched in low complexity. 2 stretches are compositionally biased toward basic and acidic residues: residues 178-197 (AVEK…ERQP) and 226-243 (PILK…DQAK). Positions 408-423 (ARSASAATAAPISSPT) are enriched in low complexity. The segment covering 432-451 (NNRDQNRRQETEVKRERPEK) has biased composition (basic and acidic residues). Positions 533–706 (RRPPVVTIMG…LLVAEVGELS (174 aa)) constitute a tr-type G domain. The tract at residues 542-549 (GHVDHGKT) is G1. 542 to 549 (GHVDHGKT) is a GTP binding site. The interval 567 to 571 (GITQH) is G2. Positions 592–595 (DTPG) are G3. Residues 592–596 (DTPGH) and 646–649 (NKID) each bind GTP. The tract at residues 646–649 (NKID) is G4. A G5 region spans residues 682 to 684 (SAI).

Belongs to the TRAFAC class translation factor GTPase superfamily. Classic translation factor GTPase family. IF-2 subfamily.

It is found in the cytoplasm. Its function is as follows. One of the essential components for the initiation of protein synthesis. Protects formylmethionyl-tRNA from spontaneous hydrolysis and promotes its binding to the 30S ribosomal subunits. Also involved in the hydrolysis of GTP during the formation of the 70S ribosomal complex. This Nostoc sp. (strain PCC 7120 / SAG 25.82 / UTEX 2576) protein is Translation initiation factor IF-2.